A 179-amino-acid polypeptide reads, in one-letter code: Disulfide bond formation protein B (179 aa).

Topologically, residues 1 to 14 are cytoplasmic; that stretch reads MLSYFKELSLNRTA. Residues 15–31 traverse the membrane as a helical segment; sequence WLLLAFVAFALEASAIY. The Periplasmic portion of the chain corresponds to 32–49; the sequence is FQYGMGLVPCVMCVYERL. Cys-41 and Cys-44 are disulfide-bonded. A helical transmembrane segment spans residues 50–65; that stretch reads AIFGLLIAGLVGAISP. The Cytoplasmic portion of the chain corresponds to 66 to 72; that stretch reads RFFLTRW. A helical transmembrane segment spans residues 73–90; that stretch reads LALLLWGFSAFKGLALAI. Residues 91–146 lie on the Periplasmic side of the membrane; sequence KHHDYQANPSPWNQCEFKPEFPQTMPFDQWFPSIFAPGPVNCSEKQWEMFGLGMPE. A disulfide bridge links Cys-105 with Cys-132. Residues 147–165 form a helical membrane-spanning segment; the sequence is WLILAFSIFALMFVIVLLS. Residues 166–179 lie on the Cytoplasmic side of the membrane; sequence QFKRAKPQYRSVFR.

The protein belongs to the DsbB family.

It localises to the cell inner membrane. In terms of biological role, required for disulfide bond formation in some periplasmic proteins. Acts by oxidizing the DsbA protein. This chain is Disulfide bond formation protein B, found in Actinobacillus pleuropneumoniae serotype 5b (strain L20).